We begin with the raw amino-acid sequence, 205 residues long: NADH-quinone oxidoreductase subunit C (205 aa).

The protein belongs to the complex I 30 kDa subunit family. NDH-1 is composed of 14 different subunits. Subunits NuoB, C, D, E, F, and G constitute the peripheral sector of the complex.

The protein resides in the cell inner membrane. It catalyses the reaction a quinone + NADH + 5 H(+)(in) = a quinol + NAD(+) + 4 H(+)(out). Its function is as follows. NDH-1 shuttles electrons from NADH, via FMN and iron-sulfur (Fe-S) centers, to quinones in the respiratory chain. The immediate electron acceptor for the enzyme in this species is believed to be ubiquinone. Couples the redox reaction to proton translocation (for every two electrons transferred, four hydrogen ions are translocated across the cytoplasmic membrane), and thus conserves the redox energy in a proton gradient. This is NADH-quinone oxidoreductase subunit C from Bartonella bacilliformis (strain ATCC 35685 / KC583 / Herrer 020/F12,63).